The following is a 301-amino-acid chain: 4-hydroxybenzoate octaprenyltransferase (301 aa).

Helical transmembrane passes span 34–54 (IGSL…ADGL), 57–77 (LWTL…GCVI), 108–128 (LWVF…LNWL), 152–172 (LPQV…FAAV), 176–196 (VPLL…AYDT), 221–241 (FDLI…VLVG), 245–265 (DLGV…AYEF), and 279–299 (AFLH…VAVA).

This sequence belongs to the UbiA prenyltransferase family. The cofactor is Mg(2+).

It localises to the cell inner membrane. It carries out the reaction all-trans-octaprenyl diphosphate + 4-hydroxybenzoate = 4-hydroxy-3-(all-trans-octaprenyl)benzoate + diphosphate. The protein operates within cofactor biosynthesis; ubiquinone biosynthesis. Functionally, catalyzes the prenylation of para-hydroxybenzoate (PHB) with an all-trans polyprenyl group. Mediates the second step in the final reaction sequence of ubiquinone-8 (UQ-8) biosynthesis, which is the condensation of the polyisoprenoid side chain with PHB, generating the first membrane-bound Q intermediate 3-octaprenyl-4-hydroxybenzoate. This chain is 4-hydroxybenzoate octaprenyltransferase, found in Xanthomonas euvesicatoria pv. vesicatoria (strain 85-10) (Xanthomonas campestris pv. vesicatoria).